The chain runs to 379 residues: Tryptophan 2,3-dioxygenase (379 aa).

Residues 57–61 (FIITH) and R128 contribute to the substrate site. Heme is bound at residue H312. T327 contributes to the substrate binding site.

This sequence belongs to the tryptophan 2,3-dioxygenase family. In terms of assembly, homotetramer. Dimer of dimers. Heme is required as a cofactor.

It catalyses the reaction L-tryptophan + O2 = N-formyl-L-kynurenine. It functions in the pathway amino-acid degradation; L-tryptophan degradation via kynurenine pathway; L-kynurenine from L-tryptophan: step 1/2. It participates in pigment biosynthesis; ommochrome biosynthesis. Its function is as follows. Heme-dependent dioxygenase that catalyzes the oxidative cleavage of the L-tryptophan (L-Trp) pyrrole ring and converts L-tryptophan to N-formyl-L-kynurenine. Catalyzes the oxidative cleavage of the indole moiety. Required during larval growth to control the level of potentially harmful free tryptophan in the hemolymph. In the adult the same reaction is the first step in the ommochrome biosynthetic pathway. This Drosophila melanogaster (Fruit fly) protein is Tryptophan 2,3-dioxygenase.